The following is a 1402-amino-acid chain: DNA-directed RNA polymerase subunit beta' (1402 aa).

4 residues coordinate Zn(2+): Cys-70, Cys-72, Cys-85, and Cys-88. Asp-460, Asp-462, and Asp-464 together coordinate Mg(2+). The Zn(2+) site is built by Cys-812, Cys-886, Cys-893, and Cys-896. Positions 1373–1402 (DRFLNGSASSNEKSRSAGVLEATDEESAGD) are disordered.

This sequence belongs to the RNA polymerase beta' chain family. As to quaternary structure, the RNAP catalytic core consists of 2 alpha, 1 beta, 1 beta' and 1 omega subunit. When a sigma factor is associated with the core the holoenzyme is formed, which can initiate transcription. Mg(2+) is required as a cofactor. Zn(2+) serves as cofactor.

It catalyses the reaction RNA(n) + a ribonucleoside 5'-triphosphate = RNA(n+1) + diphosphate. In terms of biological role, DNA-dependent RNA polymerase catalyzes the transcription of DNA into RNA using the four ribonucleoside triphosphates as substrates. This chain is DNA-directed RNA polymerase subunit beta', found in Dichelobacter nodosus (strain VCS1703A).